A 23-amino-acid polypeptide reads, in one-letter code: U1-poneritoxin-Da3b (23 aa).

It belongs to the non-disulfide-bridged peptide (NDBP) superfamily. Medium-length antimicrobial peptide (group 3) family. Ponericin-W subfamily. Expressed by the venom gland.

The protein localises to the secreted. It localises to the target cell membrane. May have antimicrobial properties, like most ant linear peptides. May act by disrupting the integrity of the bacterial cell membrane. The polypeptide is U1-poneritoxin-Da3b (Dinoponera australis (Giant neotropical hunting ant)).